Here is a 93-residue protein sequence, read N- to C-terminus: Pyrimidine/purine nucleoside phosphorylase (93 aa).

This sequence belongs to the nucleoside phosphorylase PpnP family.

The catalysed reaction is a purine D-ribonucleoside + phosphate = a purine nucleobase + alpha-D-ribose 1-phosphate. The enzyme catalyses adenosine + phosphate = alpha-D-ribose 1-phosphate + adenine. It carries out the reaction cytidine + phosphate = cytosine + alpha-D-ribose 1-phosphate. It catalyses the reaction guanosine + phosphate = alpha-D-ribose 1-phosphate + guanine. The catalysed reaction is inosine + phosphate = alpha-D-ribose 1-phosphate + hypoxanthine. The enzyme catalyses thymidine + phosphate = 2-deoxy-alpha-D-ribose 1-phosphate + thymine. It carries out the reaction uridine + phosphate = alpha-D-ribose 1-phosphate + uracil. It catalyses the reaction xanthosine + phosphate = alpha-D-ribose 1-phosphate + xanthine. Functionally, catalyzes the phosphorolysis of diverse nucleosides, yielding D-ribose 1-phosphate and the respective free bases. Can use uridine, adenosine, guanosine, cytidine, thymidine, inosine and xanthosine as substrates. Also catalyzes the reverse reactions. The protein is Pyrimidine/purine nucleoside phosphorylase of Hahella chejuensis (strain KCTC 2396).